A 386-amino-acid chain; its full sequence is MSLKDFIFTSESVGEGHPDKVCDQISDAILDAYLEQDPKSRVACETLATTNLVVIAGEITSKGKVDAQEIARNVIRDIGYNDITMGFDADFAVVSAHVHAQSPDISQGVTEGEGLFKEQGAGDQGLMFGFAINETPEFMPMPIYYSHELVKHLAGLRHSNKLKFLRPDAKSQVTVEYKDGKPVRVDTVVISTQHSPDVAHKQIEESLIEECIKKVIPANLLVNTKYFINPTGQFIVGGPHGDAGLTGRKIIVDTYGGYGRHGGGAFSGKDPSKVDRSAAYMGRYIAKNVVASGLADKCEVQLAYAIGVAEPVSVHVDTFGTGKISEEELVKRIRANFKLTPRGIIESLKLLEKGRKYRETASYGHFGRKGSTFTWEKTDKTVALKG.

H17 lines the ATP pocket. D19 contacts Mg(2+). E45 serves as a coordination point for K(+). L-methionine contacts are provided by E58 and Q101. The tract at residues 101 to 111 is flexible loop; the sequence is QSPDISQGVTE. ATP is bound by residues 168 to 170, D242, 248 to 249, A265, and K269; these read DAK and RK. Residue D242 coordinates L-methionine. K273 is an L-methionine binding site.

Belongs to the AdoMet synthase family. In terms of assembly, homotetramer; dimer of dimers. Mg(2+) is required as a cofactor. Requires K(+) as cofactor.

It localises to the cytoplasm. It catalyses the reaction L-methionine + ATP + H2O = S-adenosyl-L-methionine + phosphate + diphosphate. The protein operates within amino-acid biosynthesis; S-adenosyl-L-methionine biosynthesis; S-adenosyl-L-methionine from L-methionine: step 1/1. Catalyzes the formation of S-adenosylmethionine (AdoMet) from methionine and ATP. The overall synthetic reaction is composed of two sequential steps, AdoMet formation and the subsequent tripolyphosphate hydrolysis which occurs prior to release of AdoMet from the enzyme. This is S-adenosylmethionine synthase from Leptospira borgpetersenii serovar Hardjo-bovis (strain JB197).